The following is a 218-amino-acid chain: Elongation factor Ts (218 aa).

Positions 82–85 are involved in Mg(2+) ion dislocation from EF-Tu; that stretch reads TDFV.

It belongs to the EF-Ts family.

The protein localises to the cytoplasm. Functionally, associates with the EF-Tu.GDP complex and induces the exchange of GDP to GTP. It remains bound to the aminoacyl-tRNA.EF-Tu.GTP complex up to the GTP hydrolysis stage on the ribosome. The chain is Elongation factor Ts (tsf) from Synechocystis sp. (strain ATCC 27184 / PCC 6803 / Kazusa).